Here is a 210-residue protein sequence, read N- to C-terminus: Redox-sensing transcriptional repressor Rex (210 aa).

A DNA-binding region (H-T-H motif) is located at residues 17 to 56; sequence KYHRYLNELMKNDVDRISSKELGEKIGFTASQIRQDLNCF. Residue 91–96 participates in NAD(+) binding; that stretch reads GAGNIG.

It belongs to the transcriptional regulatory Rex family. Homodimer.

The protein resides in the cytoplasm. Modulates transcription in response to changes in cellular NADH/NAD(+) redox state. This is Redox-sensing transcriptional repressor Rex from Clostridium botulinum (strain Alaska E43 / Type E3).